Here is a 953-residue protein sequence, read N- to C-terminus: Lysosomal alpha-glucosidase (953 aa).

Positions 1–27 (MNIRKPLCSNSVVGACTLISLTTAVIL) are cleaved as a signal peptide. Positions 28–69 (GHLMLRELMLLPQDLHESSSGLWKTYRPHHQEGYKPGPLHIQ) are excised as a propeptide. Residues 80-131 (TQCDVPPSSRFDCAPDKGISQEQCEARGCCYVPAGQVLKEPQIGQPWCFFPP) enclose the P-type domain. 3 cysteine pairs are disulfide-bonded: Cys-82-Cys-109, Cys-92-Cys-108, and Cys-103-Cys-127. 3 N-linked (GlcNAc...) asparagine glycosylation sites follow: Asn-140, Asn-233, and Asn-390. Asp-404 provides a ligand contact to substrate. Asn-470 is a glycosylation site (N-linked (GlcNAc...) asparagine). Asp-518 functions as the Nucleophile in the catalytic mechanism. Glu-521 is a catalytic residue. Cys-533 and Cys-558 are disulfide-bonded. Substrate is bound by residues Arg-600 and Asp-616. An intrachain disulfide couples Cys-647 to Cys-658. Residue His-674 participates in substrate binding. Asn-883, Asn-926, and Asn-933 each carry an N-linked (GlcNAc...) asparagine glycan.

Belongs to the glycosyl hydrolase 31 family.

It is found in the lysosome. The protein localises to the lysosome membrane. It carries out the reaction Hydrolysis of terminal, non-reducing (1-&gt;4)-linked alpha-D-glucose residues with release of alpha-D-glucose.. Its function is as follows. Essential for the degradation of glycogen in lysosomes. Has highest activity on alpha-1,4-linked glycosidic linkages, but can also hydrolyze alpha-1,6-linked glucans. The protein is Lysosomal alpha-glucosidase (Gaa) of Mus musculus (Mouse).